The primary structure comprises 389 residues: Sinapine esterase (389 aa).

The first 25 residues, 1–25 (MASSLKKLITSFLLFFFYTIIVASS), serve as a signal peptide directing secretion. Catalysis depends on Ser41, which acts as the Nucleophile. Residues Asn104, Asn137, and Asn320 are each glycosylated (N-linked (GlcNAc...) asparagine). Catalysis depends on residues Asp345 and His348. Asn372 and Asn383 each carry an N-linked (GlcNAc...) asparagine glycan.

This sequence belongs to the 'GDSL' lipolytic enzyme family. In terms of tissue distribution, expressed in most tissues or organs of the mature seedlings. Not expressed in roots of mature seedlings.

The protein localises to the secreted. The enzyme catalyses O-sinapoylcholine + H2O = (E)-sinapate + choline + H(+). Inhibited by PMSF. Its function is as follows. Sinapine esterase that catalyzes that hydrolysis of sinapine, releasing choline and sinapate. Sinapine (O-sinapoylcholine) is the predominant phenolic compound in a complex group of sinapate esters in seeds of oilseed rape (B.napus). Sinapine has antinutritive activity and prevents the use of seed protein for food and feed. Shows broad substrate specificity towards various other choline esters, including phosphatidylcholine. The sequence is that of Sinapine esterase from Brassica napus (Rape).